The primary structure comprises 254 residues: Triosephosphate isomerase (254 aa).

Residue 10–12 (NWK) participates in substrate binding. H99 (electrophile) is an active-site residue. Catalysis depends on E169, which acts as the Proton acceptor. Substrate contacts are provided by residues G175, S215, and 236–237 (GG).

It belongs to the triosephosphate isomerase family. Homodimer.

The protein localises to the cytoplasm. The catalysed reaction is D-glyceraldehyde 3-phosphate = dihydroxyacetone phosphate. It participates in carbohydrate biosynthesis; gluconeogenesis. The protein operates within carbohydrate degradation; glycolysis; D-glyceraldehyde 3-phosphate from glycerone phosphate: step 1/1. Functionally, involved in the gluconeogenesis. Catalyzes stereospecifically the conversion of dihydroxyacetone phosphate (DHAP) to D-glyceraldehyde-3-phosphate (G3P). The sequence is that of Triosephosphate isomerase from Chlamydia felis (strain Fe/C-56) (Chlamydophila felis).